Reading from the N-terminus, the 547-residue chain is Cellodextrinase (547 aa).

Aspartate 148 (nucleophile) is an active-site residue. Catalysis depends on residues histidine 474, aspartate 520, and glutamate 529.

It belongs to the glycosyl hydrolase 9 (cellulase E) family.

It is found in the secreted. It catalyses the reaction Endohydrolysis of (1-&gt;4)-beta-D-glucosidic linkages in cellulose, lichenin and cereal beta-D-glucans.. Its activity is regulated as follows. Is not inhibited by methylcellulose. In terms of biological role, glycoside hydrolase that rapidly hydrolyzes short-chain cellodextrins to yield either cellobiose or cellobiose and glucose as end products; cellobiose is not hydrolyzed further. Also shows limited activity against endoglucanase specific substrates (carboxymethylcellulose (CMC), lichenan, laminarin and xylan). This is Cellodextrinase from Butyrivibrio fibrisolvens.